The chain runs to 404 residues: MAESVERLQQRVQELERELAQERSLQVPRSGDGGGGRVRIEKMSSEVVDSNPYSRLMALKRMGIVSDYEKIRTFAVAIVGVGGVGSVTAEMLTRCGIGKLLLFDYDKVELANMNRLFFQPHQAGLSKVQAAEHTLRNINPDVLFEVHNYNITTVENFQHFMDRISNGGLEEGKPVDLVLSCVDNFEARMTINTACNELGQTWMESGVSENAVSGHIQLIIPGESACFACAPPLVVAANIDEKSLKREGVCAASLPTTMGVVAGILVQNVLKFLLNFGTVSFYLGYNAMQDFFPTMSMKPNPQCDDRNCRKQQEEYKKKVAALPKQEVIQEKEEIIHEDNEWGIELVSEVSEEELKNSSGPVPDLPEGITVAYTIPKKQEDSVTEVTVEDSGESLEDLMAKMKNM.

A Phosphoserine modification is found at serine 45. ATP-binding residues include glycine 83, aspartate 104, lysine 127, asparagine 150, and asparagine 184. Residues cysteine 226 and cysteine 229 each coordinate Zn(2+). The Glycyl thioester intermediate role is filled by cysteine 250. Positions 303 and 308 each coordinate Zn(2+). The short motif at 334–346 (IIHEDNEWGIELV) is the UFM1-interacting sequence (UIS) element. The linker stretch occupies residues 347–377 (SEVSEEELKNSSGPVPDLPEGITVAYTIPKK). Serine 358 and serine 393 each carry phosphoserine. Residues 389-404 (DSGESLEDLMAKMKNM) carry the UFC1-binding sequence (UFC) motif.

It belongs to the ubiquitin-activating E1 family. UBA5 subfamily. In terms of assembly, homodimer; homodimerization is required for UFM1 activation. Interacts (via UIS motif) with UFM1; binds UFM1 via a trans-binding mechanism in which UFM1 interacts with distinct sites in both subunits of the UBA5 homodimer. Interacts (via C-terminus) with UFC1. Interacts (via UIS motif) with GABARAPL2 and, with lower affinity, with GABARAP and GABARAPL1.

It localises to the cytoplasm. It is found in the nucleus. The protein resides in the endoplasmic reticulum membrane. The protein localises to the golgi apparatus. E1-like enzyme which specifically catalyzes the first step in ufmylation. Activates UFM1 by first adenylating its C-terminal glycine residue with ATP, and thereafter linking this residue to the side chain of a cysteine residue in E1, yielding a UFM1-E1 thioester and free AMP. Activates UFM1 via a trans-binding mechanism, in which UFM1 interacts with distinct sites in both subunits of the UBA5 homodimer. Trans-binding also promotes stabilization of the UBA5 homodimer, and enhances ATP-binding. Transfer of UFM1 from UBA5 to the E2-like enzyme UFC1 also takes place using a trans mechanism. Ufmylation plays a key role in various processes, such as ribosome recycling, response to DNA damage, interferon response or reticulophagy (also called ER-phagy). Ufmylation is essential for erythroid differentiation of both megakaryocytes and erythrocytes. This Pongo abelii (Sumatran orangutan) protein is Ubiquitin-like modifier-activating enzyme 5.